The chain runs to 142 residues: Hemoglobin subunit alpha-1 (142 aa).

Positions 2–142 (LLSADDKKHI…VSSVLTSKYR (141 aa)) constitute a Globin domain. An O2-binding site is contributed by His-59. Heme b is bound at residue His-88.

This sequence belongs to the globin family. In terms of assembly, heterotetramer of two alpha chains and two beta chains. Red blood cells.

Its function is as follows. Involved in oxygen transport from the lung to the various peripheral tissues. The chain is Hemoglobin subunit alpha-1 (hba1) from Xenopus borealis (Kenyan clawed frog).